Reading from the N-terminus, the 199-residue chain is Recombination protein RecR (199 aa).

The C4-type zinc-finger motif lies at 57-72 (CQSCRTFTEQSLCPIC). The 96-residue stretch at 81-176 (GVICVVETPA…IISRIAHGVP (96 aa)) folds into the Toprim domain.

It belongs to the RecR family.

May play a role in DNA repair. It seems to be involved in an RecBC-independent recombinational process of DNA repair. It may act with RecF and RecO. In Shewanella denitrificans (strain OS217 / ATCC BAA-1090 / DSM 15013), this protein is Recombination protein RecR.